Reading from the N-terminus, the 375-residue chain is Chaperone protein DnaJ (375 aa).

One can recognise a J domain in the interval 5–70; that stretch reads DYYEVLGVSR…EKRARYDRFG (66 aa). The CR-type zinc-finger motif lies at 136 to 214; sequence GDEVTLRIPK…CRGAGQVQDI (79 aa). Residues cysteine 149, cysteine 152, cysteine 166, cysteine 169, cysteine 188, cysteine 191, cysteine 202, and cysteine 205 each contribute to the Zn(2+) site. 4 CXXCXGXG motif repeats span residues 149-156, 166-173, 188-195, and 202-209; these read CPDCSGSG, CPQCGGSG, CSACRGEG, and CPRCRGAG.

The protein belongs to the DnaJ family. In terms of assembly, homodimer. It depends on Zn(2+) as a cofactor.

It localises to the cytoplasm. Participates actively in the response to hyperosmotic and heat shock by preventing the aggregation of stress-denatured proteins and by disaggregating proteins, also in an autonomous, DnaK-independent fashion. Unfolded proteins bind initially to DnaJ; upon interaction with the DnaJ-bound protein, DnaK hydrolyzes its bound ATP, resulting in the formation of a stable complex. GrpE releases ADP from DnaK; ATP binding to DnaK triggers the release of the substrate protein, thus completing the reaction cycle. Several rounds of ATP-dependent interactions between DnaJ, DnaK and GrpE are required for fully efficient folding. Also involved, together with DnaK and GrpE, in the DNA replication of plasmids through activation of initiation proteins. The sequence is that of Chaperone protein DnaJ from Oleidesulfovibrio alaskensis (strain ATCC BAA-1058 / DSM 17464 / G20) (Desulfovibrio alaskensis).